The chain runs to 308 residues: Ornithine carbamoyltransferase (308 aa).

Carbamoyl phosphate-binding positions include 56–59 (STRT), Gln-83, Arg-107, and 134–137 (HPCQ). Residues Asn-165, Asp-225, and 229–230 (SM) each bind L-ornithine. Carbamoyl phosphate-binding positions include 266–267 (CL) and Arg-294.

It belongs to the aspartate/ornithine carbamoyltransferase superfamily. OTCase family.

It localises to the cytoplasm. The enzyme catalyses carbamoyl phosphate + L-ornithine = L-citrulline + phosphate + H(+). It functions in the pathway amino-acid degradation; L-arginine degradation via ADI pathway; carbamoyl phosphate from L-arginine: step 2/2. In terms of biological role, reversibly catalyzes the transfer of the carbamoyl group from carbamoyl phosphate (CP) to the N(epsilon) atom of ornithine (ORN) to produce L-citrulline. This Cereibacter sphaeroides (strain KD131 / KCTC 12085) (Rhodobacter sphaeroides) protein is Ornithine carbamoyltransferase.